The following is a 137-amino-acid chain: Small ribosomal subunit protein uS12 (137 aa).

Positions 1 to 57 (MPTINQLVRKPRKSKVEKSKSPALNVGYNSHKKVQTNVSSPQKRGVATRVGTMTPKK) are disordered. A 3-methylthioaspartic acid modification is found at Asp-102.

Belongs to the universal ribosomal protein uS12 family. Part of the 30S ribosomal subunit. Contacts proteins S8 and S17. May interact with IF1 in the 30S initiation complex.

Functionally, with S4 and S5 plays an important role in translational accuracy. Interacts with and stabilizes bases of the 16S rRNA that are involved in tRNA selection in the A site and with the mRNA backbone. Located at the interface of the 30S and 50S subunits, it traverses the body of the 30S subunit contacting proteins on the other side and probably holding the rRNA structure together. The combined cluster of proteins S8, S12 and S17 appears to hold together the shoulder and platform of the 30S subunit. The chain is Small ribosomal subunit protein uS12 from Streptococcus pneumoniae serotype 2 (strain D39 / NCTC 7466).